Here is a 244-residue protein sequence, read N- to C-terminus: tRNA pseudouridine synthase A (244 aa).

D52 functions as the Nucleophile in the catalytic mechanism. Y110 is a binding site for substrate.

This sequence belongs to the tRNA pseudouridine synthase TruA family. Homodimer.

It carries out the reaction uridine(38/39/40) in tRNA = pseudouridine(38/39/40) in tRNA. Its function is as follows. Formation of pseudouridine at positions 38, 39 and 40 in the anticodon stem and loop of transfer RNAs. The chain is tRNA pseudouridine synthase A from Caldicellulosiruptor saccharolyticus (strain ATCC 43494 / DSM 8903 / Tp8T 6331).